The primary structure comprises 236 residues: 3-deoxy-D-manno-octulosonic acid kinase (236 aa).

Aspartate 167 is an active-site residue.

Belongs to the protein kinase superfamily. KdkA/RfaP family.

The protein localises to the cell inner membrane. The enzyme catalyses an alpha-Kdo-(2-&gt;6)-lipid IVA + ATP = a 4-O-phospho-alpha-Kdo-(2-&gt;6)-lipid IVA + ADP + H(+). It participates in bacterial outer membrane biogenesis; LPS core biosynthesis. Functionally, catalyzes the ATP-dependent phosphorylation of the 3-deoxy-D-manno-octulosonic acid (Kdo) residue in Kdo-lipid IV(A) at the 4-OH position. This chain is 3-deoxy-D-manno-octulosonic acid kinase, found in Vibrio vulnificus (strain CMCP6).